Reading from the N-terminus, the 508-residue chain is Aspartyl/glutamyl-tRNA(Asn/Gln) amidotransferase subunit B (508 aa).

It belongs to the GatB/GatE family. GatB subfamily. In terms of assembly, heterotrimer of A, B and C subunits.

It carries out the reaction L-glutamyl-tRNA(Gln) + L-glutamine + ATP + H2O = L-glutaminyl-tRNA(Gln) + L-glutamate + ADP + phosphate + H(+). The enzyme catalyses L-aspartyl-tRNA(Asn) + L-glutamine + ATP + H2O = L-asparaginyl-tRNA(Asn) + L-glutamate + ADP + phosphate + 2 H(+). Functionally, allows the formation of correctly charged Asn-tRNA(Asn) or Gln-tRNA(Gln) through the transamidation of misacylated Asp-tRNA(Asn) or Glu-tRNA(Gln) in organisms which lack either or both of asparaginyl-tRNA or glutaminyl-tRNA synthetases. The reaction takes place in the presence of glutamine and ATP through an activated phospho-Asp-tRNA(Asn) or phospho-Glu-tRNA(Gln). The polypeptide is Aspartyl/glutamyl-tRNA(Asn/Gln) amidotransferase subunit B (Salinibacter ruber (strain DSM 13855 / M31)).